The primary structure comprises 533 residues: GMP synthase [glutamine-hydrolyzing] (533 aa).

Residues 25 to 215 (SIVIFDFGSQ…VFNICKCHAN (191 aa)) form the Glutamine amidotransferase type-1 domain. C102 functions as the Nucleophile in the catalytic mechanism. Residues H189 and E191 contribute to the active site. A GMPS ATP-PPase domain is found at 216 to 408 (WTMGNYIQES…LGLPDEMIWR (193 aa)). ATP is bound at residue 243 to 249 (SGGVDSA).

Homodimer.

It carries out the reaction XMP + L-glutamine + ATP + H2O = GMP + L-glutamate + AMP + diphosphate + 2 H(+). The protein operates within purine metabolism; GMP biosynthesis; GMP from XMP (L-Gln route): step 1/1. Catalyzes the synthesis of GMP from XMP. The polypeptide is GMP synthase [glutamine-hydrolyzing] (Dehalococcoides mccartyi (strain CBDB1)).